Consider the following 115-residue polypeptide: Protein V2 (115 aa).

The protein belongs to the geminiviridae protein AV2/V2 family. In terms of assembly, interacts with host SGS3.

The protein localises to the host cytoplasm. It is found in the host perinuclear region. Through its interaction with host SGS3, acts as a suppressor of RNA-mediated gene silencing, also known as post-transcriptional gene silencing (PTGS), a mechanism of plant viral defense that limits the accumulation of viral RNAs. The polypeptide is Protein V2 (Tomato yellow leaf curl China virus (TYLCCNV)).